The following is a 408-amino-acid chain: Argininosuccinate synthase (408 aa).

ATP is bound by residues 14–22 (AYSGGLDTS) and Ala41. Residues Tyr92 and Ser97 each coordinate L-citrulline. Gly122 provides a ligand contact to ATP. L-aspartate contacts are provided by Thr124, Asn128, and Asp129. Residue Asn128 coordinates L-citrulline. The L-citrulline site is built by Arg132, Ser181, Ser190, Glu266, and Tyr278.

It belongs to the argininosuccinate synthase family. Type 1 subfamily. As to quaternary structure, homotetramer.

The protein localises to the cytoplasm. It catalyses the reaction L-citrulline + L-aspartate + ATP = 2-(N(omega)-L-arginino)succinate + AMP + diphosphate + H(+). Its pathway is amino-acid biosynthesis; L-arginine biosynthesis; L-arginine from L-ornithine and carbamoyl phosphate: step 2/3. This is Argininosuccinate synthase from Pelobacter propionicus (strain DSM 2379 / NBRC 103807 / OttBd1).